A 149-amino-acid polypeptide reads, in one-letter code: Calmodulin (149 aa).

Ala2 carries the post-translational modification N-acetylalanine. 4 EF-hand domains span residues 8-43 (EQIA…LGQN), 44-79 (PTEA…KMKD), 81-116 (DSEE…LGEK), and 117-149 (LTDE…MTSK). Residues Asp21, Asp23, Asp25, Thr27, Glu32, Asp57, Asp59, Asn61, Thr63, Glu68, Asp94, Asp96, Asn98, and Glu105 each contribute to the Ca(2+) site. At Lys116 the chain carries N6,N6,N6-trimethyllysine. Residues Asp130, Asp132, Asp134, Gln136, and Glu141 each contribute to the Ca(2+) site.

Belongs to the calmodulin family.

Calmodulin mediates the control of a large number of enzymes, ion channels and other proteins by Ca(2+). Among the enzymes to be stimulated by the calmodulin-Ca(2+) complex are a number of protein kinases and phosphatases. The chain is Calmodulin from Metridium senile (Brown sea anemone).